The primary structure comprises 453 residues: MMESEVDSEQSRLKREIAELRAALNRKEQCLRELEASVSSDASAEEQVVGNALESPGRAVHTKLTNDDIARYSRQLILPDFGVQGQLKLKNSSVLIVGLGGLGCPAAQYLAAAGCGRLGLIDYDEVERSNFHRQILHSESRCGMSKAESARIALLELNPHCEIHCHSRLLYSQNALHIIRGYDVVLDCSDNVPTRYLLSDACVMLRKPLVSGSALKMDGQLTVYNYGNGPCYRCIYPVPPPPEAVTNCGDGGVLGAVTGTIGAMQALEAIKVIVGLGDVLAGRLLIFDGSSGLFRNIRIRSKRPNCHVCSAQPLITELIDYEMFCGMHATDKDNPLQLLSTDERLSVKDYHAKLQAQPHLLIDVRPTAEFEICQLPEAVNVPLVEILDDSYLKRFGKQLEDKELPIILLCRRGNDSQIAVQHVRNRFPMHSVRDLIGGLHAWTNSVDPSFPIY.

T62 is subject to Phosphothreonine. ATP-binding positions include G101, D122, 129-133 (SNFHR), K146, and 190-191 (DN). The Zn(2+) site is built by C231 and C234. The Glycyl thioester intermediate; for adenylyltransferase activity role is filled by C248. 2 residues coordinate Zn(2+): C306 and C309. In terms of domain architecture, Rhodanese spans 355-451 (QAQPHLLIDV…WTNSVDPSFP (97 aa)). The active-site Cysteine persulfide intermediate; for sulfurtransferase activity is the C410.

This sequence in the N-terminal section; belongs to the HesA/MoeB/ThiF family. UBA4 subfamily. It depends on Zn(2+) as a cofactor.

The protein resides in the cytoplasm. The protein localises to the cytosol. It carries out the reaction [molybdopterin-synthase sulfur-carrier protein]-C-terminal Gly-Gly + ATP + H(+) = [molybdopterin-synthase sulfur-carrier protein]-C-terminal Gly-Gly-AMP + diphosphate. It catalyses the reaction [molybdopterin-synthase sulfur-carrier protein]-C-terminal Gly-Gly-AMP + S-sulfanyl-L-cysteinyl-[cysteine desulfurase] + AH2 = [molybdopterin-synthase sulfur-carrier protein]-C-terminal-Gly-aminoethanethioate + L-cysteinyl-[cysteine desulfurase] + A + AMP + 2 H(+). The protein operates within tRNA modification; 5-methoxycarbonylmethyl-2-thiouridine-tRNA biosynthesis. It functions in the pathway cofactor biosynthesis; molybdopterin biosynthesis. Functionally, plays a central role in 2-thiolation of mcm(5)S(2)U at tRNA wobble positions of cytosolic tRNA(Lys), tRNA(Glu) and tRNA(Gln). Also essential during biosynthesis of the molybdenum cofactor. Acts by mediating the C-terminal thiocarboxylation of sulfur carriers URM1 and MOCS2A. Its N-terminus first activates URM1 and MOCS2A as acyl-adenylates (-COAMP), then the persulfide sulfur on the catalytic cysteine is transferred to URM1 and MOCS2A to form thiocarboxylation (-COSH) of their C-terminus. The reaction probably involves hydrogen sulfide that is generated from the persulfide intermediate and that acts as a nucleophile towards URM1 and MOCS2A. Subsequently, a transient disulfide bond is formed. Does not use thiosulfate as sulfur donor; NFS1 probably acting as a sulfur donor for thiocarboxylation reactions. The sequence is that of Adenylyltransferase and sulfurtransferase MOCS3 from Drosophila yakuba (Fruit fly).